The sequence spans 382 residues: Galactokinase (382 aa).

34-37 (EHTD) serves as a coordination point for substrate. ATP is bound at residue 124–130 (GAGLSSS). Positions 130 and 162 each coordinate Mg(2+). The active-site Proton acceptor is the aspartate 174. Residue tyrosine 223 coordinates substrate.

The protein belongs to the GHMP kinase family. GalK subfamily.

Its subcellular location is the cytoplasm. It catalyses the reaction alpha-D-galactose + ATP = alpha-D-galactose 1-phosphate + ADP + H(+). Its pathway is carbohydrate metabolism; galactose metabolism. Catalyzes the transfer of the gamma-phosphate of ATP to D-galactose to form alpha-D-galactose-1-phosphate (Gal-1-P). The protein is Galactokinase of Enterobacter sp. (strain 638).